Reading from the N-terminus, the 455-residue chain is Cysteinylglycine-S-conjugate dipeptidase (455 aa).

His-92 is a Zn(2+) binding site. Asp-94 is a catalytic residue. Zn(2+) is bound at residue Asp-125. Catalysis depends on Glu-158, which acts as the Proton acceptor. Zn(2+)-binding residues include Glu-159, Glu-163, and His-428.

Belongs to the peptidase M20F family. Zn(2+) is required as a cofactor.

It catalyses the reaction an S-substituted L-cysteinylglycine + H2O = an S-substituted L-cysteine + glycine. The catalysed reaction is S-(1-hydroxy-3-methylhexan-3-yl)-L-cysteinylglycine + H2O = S-(1-hydroxy-3-methylhexan-3-yl)-L-cysteine + glycine. It carries out the reaction S-benzyl-L-cysteinylglycine + H2O = S-benzyl-L-cysteine + glycine. Its function is as follows. Metallopeptidase that hydrolyzes the Cys-Gly bond of Cys-Gly-S-conjugates. Involved in the formation of the human body odorant 3-methyl-3-sulfanylhexan-1-ol (3M3SH) from odorless axilla secretions. Catalyzes the hydrolysis of the Cys-Gly bond of the Cys-Gly-S-conjugate of 3M3SH, a key precursor secreted by apocrine glands in human axilla skin. The Cys-S-conjugate obtained is then cleaved by the Cys-S-conjugate beta-lyase MetC, which finally releases 3M3SH. The polypeptide is Cysteinylglycine-S-conjugate dipeptidase (Corynebacterium striatum).